The sequence spans 467 residues: Ribulose bisphosphate carboxylase large chain (467 aa).

The residue at position 5 (K5) is an N6,N6,N6-trimethyllysine. Residues N114 and T164 each coordinate substrate. K166 acts as the Proton acceptor in catalysis. K168 serves as a coordination point for substrate. The Mg(2+) site is built by K192, D194, and E195. K192 carries the post-translational modification N6-carboxylysine. Catalysis depends on H285, which acts as the Proton acceptor. The substrate site is built by R286, H318, and S370.

Belongs to the RuBisCO large chain family. Type I subfamily. In terms of assembly, heterohexadecamer of 8 large chains and 8 small chains; disulfide-linked. The disulfide link is formed within the large subunit homodimers. Mg(2+) serves as cofactor. Post-translationally, the disulfide bond which can form in the large chain dimeric partners within the hexadecamer appears to be associated with oxidative stress and protein turnover.

It localises to the plastid. It is found in the chloroplast. The enzyme catalyses 2 (2R)-3-phosphoglycerate + 2 H(+) = D-ribulose 1,5-bisphosphate + CO2 + H2O. The catalysed reaction is D-ribulose 1,5-bisphosphate + O2 = 2-phosphoglycolate + (2R)-3-phosphoglycerate + 2 H(+). RuBisCO catalyzes two reactions: the carboxylation of D-ribulose 1,5-bisphosphate, the primary event in carbon dioxide fixation, as well as the oxidative fragmentation of the pentose substrate in the photorespiration process. Both reactions occur simultaneously and in competition at the same active site. The polypeptide is Ribulose bisphosphate carboxylase large chain (Eriodictyon californicum (California yerba santa)).